A 273-amino-acid polypeptide reads, in one-letter code: Dermonecrotic toxin LapSicTox-alphaIB1b3 (273 aa).

H5 is an active-site residue. Positions 25 and 27 each coordinate Mg(2+). H41 (nucleophile) is an active-site residue. 2 disulfides stabilise this stretch: C45–C51 and C47–C190. Mg(2+) is bound at residue D85. A glycan (N-linked (GlcNAc...) asparagine) is linked at N250.

The protein belongs to the arthropod phospholipase D family. Class II subfamily. Mg(2+) is required as a cofactor. As to expression, expressed by the venom gland.

It localises to the secreted. It catalyses the reaction an N-(acyl)-sphingosylphosphocholine = an N-(acyl)-sphingosyl-1,3-cyclic phosphate + choline. The enzyme catalyses an N-(acyl)-sphingosylphosphoethanolamine = an N-(acyl)-sphingosyl-1,3-cyclic phosphate + ethanolamine. The catalysed reaction is a 1-acyl-sn-glycero-3-phosphocholine = a 1-acyl-sn-glycero-2,3-cyclic phosphate + choline. It carries out the reaction a 1-acyl-sn-glycero-3-phosphoethanolamine = a 1-acyl-sn-glycero-2,3-cyclic phosphate + ethanolamine. In terms of biological role, dermonecrotic toxins cleave the phosphodiester linkage between the phosphate and headgroup of certain phospholipids (sphingolipid and lysolipid substrates), forming an alcohol (often choline) and a cyclic phosphate. This toxin acts on sphingomyelin (SM). It may also act on ceramide phosphoethanolamine (CPE), lysophosphatidylcholine (LPC) and lysophosphatidylethanolamine (LPE), but not on lysophosphatidylserine (LPS), and lysophosphatidylglycerol (LPG). It acts by transphosphatidylation, releasing exclusively cyclic phosphate products as second products. Induces dermonecrosis, hemolysis, increased vascular permeability, edema, inflammatory response, and platelet aggregation. The polypeptide is Dermonecrotic toxin LapSicTox-alphaIB1b3 (Loxosceles apachea (Apache recluse spider)).